Reading from the N-terminus, the 432-residue chain is Glutamate--cysteine ligase EgtA (432 aa).

This sequence belongs to the glutamate--cysteine ligase type 2 family. EgtA subfamily.

The enzyme catalyses L-cysteine + L-glutamate + ATP = gamma-L-glutamyl-L-cysteine + ADP + phosphate + H(+). It functions in the pathway amino-acid biosynthesis; ergothioneine biosynthesis. In terms of biological role, catalyzes the synthesis of gamma-glutamylcysteine (gamma-GC) which is used as substrate for the biosynthesis of the low-molecular thiol compound ergothioneine (ERG). ERG is one of the major redox buffers which protects bacteria against redox stressors and antibiotics; loss of ERG or mycothiol (MSH, the other major redox buffer in this bacteria) leads to respiratory alterations and bioenergetic deficiencies that negatively impact virulence. The chain is Glutamate--cysteine ligase EgtA (egtA) from Mycobacterium tuberculosis (strain CDC 1551 / Oshkosh).